The following is a 155-amino-acid chain: Transcriptional repressor NrdR (155 aa).

A zinc finger spans residues 3-34 (CPFCHAEETKVVDSRLVADGAQVRRRRECLEC). The 91-residue stretch at 49–139 (PLIIKRDGRR…VYKRFKDVSD (91 aa)) folds into the ATP-cone domain.

It belongs to the NrdR family. It depends on Zn(2+) as a cofactor.

Functionally, negatively regulates transcription of bacterial ribonucleotide reductase nrd genes and operons by binding to NrdR-boxes. The polypeptide is Transcriptional repressor NrdR (Legionella pneumophila (strain Lens)).